The sequence spans 134 residues: Insulin-like peptide 4 (134 aa).

Positions 1 to 26 are cleaved as a signal peptide; sequence MSLIRLGLALLLLLATVSQLLQPVQG. Disulfide bonds link Cys31-Cys120, Cys43-Cys133, and Cys119-Cys124. The propeptide at 54-108 is connecting peptide; it reads SSASKDARVRDLIRKLQQPDEDIEQETETGRLKQKHTDADTEKGVPPAVGSGRKL. Residues 72 to 107 are disordered; the sequence is PDEDIEQETETGRLKQKHTDADTEKGVPPAVGSGRK. The span at 81–96 shows a compositional bias: basic and acidic residues; the sequence is ETGRLKQKHTDADTEK.

It belongs to the insulin family. In terms of assembly, heterodimer of a B chain and an A chain linked by two disulfide bonds. Expressed at a high level in the embryonic mesoderm, with expression continuing after gastrulation and reducing from stage 12 onwards. Highly expressed in the embryonic anterior midgut rudiment and larval midgut.

It localises to the secreted. In terms of biological role, possible ligand of InR/insulin-like receptor. This chain is Insulin-like peptide 4, found in Drosophila melanogaster (Fruit fly).